The following is a 376-amino-acid chain: MRRREALRQAQRWVIKVGSALITDDGRGLAHEQMSAWADQVAALRKAGRQVTLVSSGAVAEGMQRLGWRSRPRALYQLQAAAGVGQSGLVHAWSDGLARHRLQTAQVLLTHDDLSDRRRYLNARSALREMLRLGVVPVVNENDTVVTDEIRFGDNDTLAALVANLVEAEALVVLTDQPGLMDRDPREHPDAVLLDEVRAGDPELERLCGSPAGVLGRGGMLTKVRGAERAARSGTYTVVASGREGRVIQRLADAEPGLGTLFVPDQEPLAARKQWLASHLQTRGALSLDEGAARALRESGKSLLPVGVVAVEGGFSRGEMVVCRDPAGIEVARGLVNYAAEEARLICGRASRDIETTLGYVDEPELIHRDNMVVTV.

Lys-16 contacts ATP. Ser-56, Asp-143, and Asn-155 together coordinate substrate. 175 to 176 (TD) lines the ATP pocket. One can recognise a PUA domain in the interval 283-361 (RGALSLDEGA…RDIETTLGYV (79 aa)).

This sequence belongs to the glutamate 5-kinase family.

The protein resides in the cytoplasm. It catalyses the reaction L-glutamate + ATP = L-glutamyl 5-phosphate + ADP. Its pathway is amino-acid biosynthesis; L-proline biosynthesis; L-glutamate 5-semialdehyde from L-glutamate: step 1/2. Its function is as follows. Catalyzes the transfer of a phosphate group to glutamate to form L-glutamate 5-phosphate. In Halorhodospira halophila (strain DSM 244 / SL1) (Ectothiorhodospira halophila (strain DSM 244 / SL1)), this protein is Glutamate 5-kinase.